The chain runs to 946 residues: Protein translocase subunit SecA (946 aa).

Residues Gln87, Gly105–Thr109, and Asp524 each bind ATP. 2 disordered regions span residues Pro872–Glu892 and Pro904–Ala946. The segment covering Thr907–Arg917 has biased composition (basic and acidic residues). Positions 930, 932, 941, and 942 each coordinate Zn(2+). The span at Lys936–Ala946 shows a compositional bias: basic residues.

This sequence belongs to the SecA family. As to quaternary structure, monomer and homodimer. Part of the essential Sec protein translocation apparatus which comprises SecA, SecYEG and auxiliary proteins SecDF-YajC and YidC. Zn(2+) is required as a cofactor.

The protein resides in the cell inner membrane. The protein localises to the cytoplasm. It carries out the reaction ATP + H2O + cellular proteinSide 1 = ADP + phosphate + cellular proteinSide 2.. Its function is as follows. Part of the Sec protein translocase complex. Interacts with the SecYEG preprotein conducting channel. Has a central role in coupling the hydrolysis of ATP to the transfer of proteins into and across the cell membrane, serving both as a receptor for the preprotein-SecB complex and as an ATP-driven molecular motor driving the stepwise translocation of polypeptide chains across the membrane. This chain is Protein translocase subunit SecA, found in Rhodopseudomonas palustris (strain BisB5).